An 855-amino-acid polypeptide reads, in one-letter code: DNA mismatch repair protein MutS (855 aa).

Residue 616–623 (GPNMGGKS) coordinates ATP.

Belongs to the DNA mismatch repair MutS family.

Its function is as follows. This protein is involved in the repair of mismatches in DNA. It is possible that it carries out the mismatch recognition step. This protein has a weak ATPase activity. The chain is DNA mismatch repair protein MutS from Salmonella paratyphi A (strain ATCC 9150 / SARB42).